We begin with the raw amino-acid sequence, 89 residues long: Small ribosomal subunit protein bS20 (89 aa).

It belongs to the bacterial ribosomal protein bS20 family.

Functionally, binds directly to 16S ribosomal RNA. The sequence is that of Small ribosomal subunit protein bS20 from Syntrophus aciditrophicus (strain SB).